The following is a 530-amino-acid chain: MEDDSLYLGGEWQFNHFSKLTSSRPDAAFAEIQRTSLPEKSPLSCETRVDLCDDLAPVARQLAPREKLPLSSRRPAAVGAGLQNMGNTCYVNASLQCLTYTPPLANYMLSREHSQTCHRHKGCMLCTMQAHITRALHNPGHVIQPSQALAAGFHRGKQEDAHEFLMFTVDAMKKACLPGHKQVDHHSKDTTLIHQIFGGYWRSQIKCLHCHGISDTFDPYLDIALDIQAAQSVQQALEQLVKPEELNGENAYHCGVCLQRAPASKTLTLHTSAKVLILVLKRFSDVTGNKIAKNVQYPECLDMQPYMSQTNTGPLVYVLYAVLVHAGWSCHNGHYFSYVKAQEGQWYKMDDAEVTASSITSVLSQQAYVLFYIQKSEWERHSESVSRGREPRALGAEDTDRRATQGELKRDHPCLQAPELDEHLVERATQESTLDHWKFLQEQNKTKPEFNVRKVEGTLPPDVLVIHQSKYKCGMKNHHPEQQSSLLNLSSTTPTHQESMNTGTLASLRGRARRSKGKNKHSKRALLVCQ.

The USP domain maps to 80–375 (AGLQNMGNTC…QAYVLFYIQK (296 aa)). Cys-89 acts as the Nucleophile in catalysis. His-334 acts as the Proton acceptor in catalysis. Basic and acidic residues-rich tracts occupy residues 382–392 (SESVSRGREPR) and 398–413 (DTDR…RDHP). 2 disordered regions span residues 382–413 (SESV…RDHP) and 509–530 (RGRA…LVCQ). The span at 510–524 (GRARRSKGKNKHSKR) shows a compositional bias: basic residues.

It belongs to the peptidase C19 family. USP17 subfamily.

Its subcellular location is the nucleus. The protein resides in the endoplasmic reticulum. The enzyme catalyses Thiol-dependent hydrolysis of ester, thioester, amide, peptide and isopeptide bonds formed by the C-terminal Gly of ubiquitin (a 76-residue protein attached to proteins as an intracellular targeting signal).. Deubiquitinating enzyme that removes conjugated ubiquitin from specific proteins to regulate different cellular processes that may include cell proliferation, progression through the cell cycle, apoptosis, cell migration, and the cellular response to viral infection. In Homo sapiens (Human), this protein is Ubiquitin carboxyl-terminal hydrolase 17-like protein 11 (USP17L11).